We begin with the raw amino-acid sequence, 461 residues long: Putative aldehyde dehydrogenase FUS7 (461 aa).

An NAD(+)-binding site is contributed by 220-225 (GSTTTG). Catalysis depends on residues E242 and C276.

Belongs to the aldehyde dehydrogenase family.

It catalyses the reaction an aldehyde + NAD(+) + H2O = a carboxylate + NADH + 2 H(+). In terms of biological role, putative aldehyde dehydrogenase; part of the gene cluster that mediates the biosynthesis of the mycotoxin fusarin C. Within the cluster, FUS1, FUS2, FUS8 and FUS9 are sufficient for fusarin production. The other FUS cluster members are not essential for fusarin C biosynthesis. In Gibberella fujikuroi (strain CBS 195.34 / IMI 58289 / NRRL A-6831) (Bakanae and foot rot disease fungus), this protein is Putative aldehyde dehydrogenase FUS7.